Consider the following 215-residue polypeptide: BAG family molecular chaperone regulator 5, mitochondrial (215 aa).

A mitochondrion-targeting transit peptide spans 1-14 (MKRSRKFSSSTTTT). In terms of domain architecture, IQ spans 50–79 (ATAAAARIQSGYRSYRIRNLYKKISSINRE). A BAG domain is found at 72 to 149 (KISSINREAN…GMQEILDSIS (78 aa)).

Binds to the ATPase domain of HSP70/HSC70 chaperones. Interacts with HSP70-1.

The protein resides in the mitochondrion. In terms of biological role, co-chaperone that regulates diverse cellular pathways, such as programmed cell death and stress responses. This chain is BAG family molecular chaperone regulator 5, mitochondrial (BAG5), found in Arabidopsis thaliana (Mouse-ear cress).